The sequence spans 692 residues: Translation initiation factor IF-2 (692 aa).

The tr-type G domain occupies 194 to 363 (PRPPIVTVMG…LLVAEMEDLK (170 aa)). Positions 203–210 (GHVDHGKT) are G1. GTP is bound at residue 203–210 (GHVDHGKT). Residues 228–232 (GITQH) are G2. Residues 249–252 (DTPG) form a G3 region. Residues 249–253 (DTPGH) and 303–306 (NKID) contribute to the GTP site. Residues 303 to 306 (NKID) form a G4 region. A G5 region spans residues 339–341 (SAK).

Belongs to the TRAFAC class translation factor GTPase superfamily. Classic translation factor GTPase family. IF-2 subfamily.

The protein resides in the cytoplasm. Its function is as follows. One of the essential components for the initiation of protein synthesis. Protects formylmethionyl-tRNA from spontaneous hydrolysis and promotes its binding to the 30S ribosomal subunits. Also involved in the hydrolysis of GTP during the formation of the 70S ribosomal complex. The chain is Translation initiation factor IF-2 from Thermoanaerobacter sp. (strain X514).